The chain runs to 326 residues: Beta-ketoacyl-[acyl-carrier-protein] synthase III (326 aa).

Catalysis depends on residues Cys120 and His253. An ACP-binding region spans residues 254–258 (QANIR). Asn283 is a catalytic residue.

This sequence belongs to the thiolase-like superfamily. FabH family. In terms of assembly, homodimer.

The protein resides in the cytoplasm. The enzyme catalyses malonyl-[ACP] + acetyl-CoA + H(+) = 3-oxobutanoyl-[ACP] + CO2 + CoA. It participates in lipid metabolism; fatty acid biosynthesis. Functionally, catalyzes the condensation reaction of fatty acid synthesis by the addition to an acyl acceptor of two carbons from malonyl-ACP. Catalyzes the first condensation reaction which initiates fatty acid synthesis and may therefore play a role in governing the total rate of fatty acid production. Possesses both acetoacetyl-ACP synthase and acetyl transacylase activities. Its substrate specificity determines the biosynthesis of branched-chain and/or straight-chain of fatty acids. This chain is Beta-ketoacyl-[acyl-carrier-protein] synthase III, found in Cupriavidus taiwanensis (strain DSM 17343 / BCRC 17206 / CCUG 44338 / CIP 107171 / LMG 19424 / R1) (Ralstonia taiwanensis (strain LMG 19424)).